A 560-amino-acid polypeptide reads, in one-letter code: Choline/ethanolamine transporter FLVCR1 (560 aa).

Residues 1–43 (MARPDDEVGPAVAPGHPLGKGYLPVPKGAPDGEARLVPQNGPE) form a disordered region. At 1–92 (MARPDDEVGP…EDVPCPACPP (92 aa)) the chain is on the cytoplasmic side. The chain crosses the membrane as a helical span at residues 93–117 (RTALSPRRFVVLLIFSLYSLVNAFQ). Topologically, residues 118-135 (WIQYSSISNVFEDFYEVS) are extracellular. Residues 136 to 163 (PLHINWLSMVYMVAYVPLIFPATWLLDT) form a helical membrane-spanning segment. At 164–165 (RG) the chain is on the cytoplasmic side. A helical transmembrane segment spans residues 166–185 (LRLTALLGSGLNCLGAWVKC). The Extracellular portion of the chain corresponds to 186-192 (GSVQRHL). A helical membrane pass occupies residues 193–221 (FWVTMLGQILCSVAQVFILGLPSPVASVW). Gln-207 contacts ethanolamine. Topologically, residues 222 to 226 (FGPKE) are cytoplasmic. The chain crosses the membrane as a helical span at residues 227-252 (VSTACATAVLGNQLGTAVGFLLPPVL). The Extracellular portion of the chain corresponds to 253–270 (VPALGTQNNTGLLAHTQN). Asn-270 is a glycosylation site (N-linked (GlcNAc...) asparagine). The chain crosses the membrane as a helical span at residues 271–300 (NTDLLAHNINTMFYGTAFISTFLFFLTVIA). Over 301–336 (FKEKPPLPPSQAQAILRDSPPEEYSYKSSIWNLCRN) the chain is Cytoplasmic. The helical transmembrane segment at 337-367 (IPFVLLLVSYGIMTGAFYSISTLLNQIILTY) threads the bilayer. Residues 368–371 (YVGE) are Extracellular-facing. The helical transmembrane segment at 372 to 400 (EVNAGRIGLTLVVAGMVGSILCGLWLDYT) threads the bilayer. Residues 401–402 (KT) are Cytoplasmic-facing. The chain crosses the membrane as a helical span at residues 403–425 (YKQTTLIVYVLSFIGMLIFTFTL). The Extracellular segment spans residues 426 to 428 (NLG). A helical membrane pass occupies residues 429 to 458 (YIVALFFTGGILGFFMTGYLPLGFEFAVEI). Over 459-466 (TYPESEGM) the chain is Cytoplasmic. The chain crosses the membrane as a helical span at residues 467 to 492 (SSGLLNTAAQILGIFFTLAQGKITTD). An ethanolamine-binding site is contributed by Gln-476. Gln-476 contributes to the choline binding site. The Extracellular segment spans residues 493-495 (YNS). The helical transmembrane segment at 496–518 (PEAGNIFLCAWMFVGIILTALIK) threads the bilayer. Over 519-560 (SDLRRHNINTGLTNIDVKAVPVDSRVDPKPKAMVSIQSESSL) the chain is Cytoplasmic. Position 542 is a phosphoserine (Ser-542).

It belongs to the major facilitator superfamily. Feline leukemia virus subgroup C receptor (TC 2.A.1.28.1) family.

It is found in the cell membrane. It catalyses the reaction choline(out) = choline(in). The enzyme catalyses ethanolamine(in) = ethanolamine(out). The catalysed reaction is heme b(in) = heme b(out). Functionally, uniporter that mediates the transport of extracellular choline and ethanolamine into cells, thereby playing a key role in phospholipid biosynthesis. Choline and ethanolamine are the precursors of phosphatidylcholine and phosphatidylethanolamine, respectively, the two most abundant phospholipids. Transport is not coupled with proton transport and is exclusively driven by the choline (or ethanolamine) gradient across the plasma membrane. Also acts as a heme b transporter that mediates heme efflux from the cytoplasm to the extracellular compartment. The chain is Choline/ethanolamine transporter FLVCR1 (Flvcr1) from Mus terricolor (Earth-colored mouse).